A 261-amino-acid chain; its full sequence is Imidazole glycerol phosphate synthase subunit HisF (261 aa).

Catalysis depends on residues D11 and D130.

Belongs to the HisA/HisF family. Heterodimer of HisH and HisF.

The protein resides in the cytoplasm. The enzyme catalyses 5-[(5-phospho-1-deoxy-D-ribulos-1-ylimino)methylamino]-1-(5-phospho-beta-D-ribosyl)imidazole-4-carboxamide + L-glutamine = D-erythro-1-(imidazol-4-yl)glycerol 3-phosphate + 5-amino-1-(5-phospho-beta-D-ribosyl)imidazole-4-carboxamide + L-glutamate + H(+). It functions in the pathway amino-acid biosynthesis; L-histidine biosynthesis; L-histidine from 5-phospho-alpha-D-ribose 1-diphosphate: step 5/9. In terms of biological role, IGPS catalyzes the conversion of PRFAR and glutamine to IGP, AICAR and glutamate. The HisF subunit catalyzes the cyclization activity that produces IGP and AICAR from PRFAR using the ammonia provided by the HisH subunit. The chain is Imidazole glycerol phosphate synthase subunit HisF from Jannaschia sp. (strain CCS1).